A 581-amino-acid polypeptide reads, in one-letter code: Ezrin (581 aa).

The FERM domain occupies 2-295; it reads PKPINVRVTT…GNHELYMRRR (294 aa). The residue at position 60 (Lys60) is an N6-acetyllysine. The [IL]-x-C-x-x-[DE] motif signature appears at 115 to 120; it reads IYCPPE. Tyr146 is subject to Phosphotyrosine; by PDGFR. Residues 244-581 form an interaction with SCYL3 region; the sequence is EIRNISFNDK…KQRIDEFEAM (338 aa). Residues 302 to 462 are a coiled coil; the sequence is VQQMKAQARE…QDDLVKTREE (161 aa). A disordered region spans residues 306-341; it reads KAQAREEKHQKQLERQQLETEKKRRETVEREKEQMM. Over residues 308–341 the composition is skewed to basic and acidic residues; sequence QAREEKHQKQLERQQLETEKKRRETVEREKEQMM. A Phosphotyrosine; by PDGFR modification is found at Tyr354. A Phosphoserine modification is found at Ser366. Residue Tyr476 is modified to Phosphotyrosine. Residues 534 to 560 form a disordered region; that stretch reads SQARDENKRTHNDIIHNENMRQGRDKY. Residues 535 to 560 are compositionally biased toward basic and acidic residues; the sequence is QARDENKRTHNDIIHNENMRQGRDKY. The residue at position 562 (Thr562) is a Phosphothreonine; by ROCK2 and PKC/PRKCI.

Interacts with PALS1 and NHERF2. Found in a complex with EZR, PODXL and NHERF2. Interacts with MCC, PLEKHG6, PODXL, SCYL3/PACE1, NHERF1 and TMEM8B. Interacts (when phosphorylated) with FES/FPS. Interacts with dimeric S100P, the interaction may be activating through unmasking of F-actin binding sites. Identified in complexes that contain VIM, EZR, AHNAK, BFSP1, BFSP2, ANK2, PLEC, PRX and spectrin. Detected in a complex composed of at least EZR, AHNAK, PPL and PRX. Interacts with PDPN (via cytoplasmic domain); activates RHOA and promotes epithelial-mesenchymal transition. Interacts with SPN/CD43 cytoplasmic tail, CD44 and ICAM2. Interacts with SLC9A3; interaction targets SLC9A3 to the apical membrane. Interacts with SLC9A1; regulates interactions of SLC9A1 with cytoskeletal and promotes stress fiber formation. Interacts with CLIC5; may work together in a complex which also includes RDX and MYO6 to stabilize linkages between the plasma membrane and subjacent actin cytoskeleton at the base of stereocilia. Phosphorylated by tyrosine-protein kinases. Phosphorylation by ROCK2 suppresses the head-to-tail association of the N-terminal and C-terminal halves resulting in an opened conformation which is capable of actin and membrane-binding. In terms of processing, S-nitrosylation is induced by interferon-gamma and oxidatively-modified low-densitity lipoprotein (LDL(ox)) possibly implicating the iNOS-S100A8/9 transnitrosylase complex. As to expression, detected in eye lens fiber cells (at protein level).

The protein localises to the apical cell membrane. It is found in the cell projection. It localises to the microvillus membrane. Its subcellular location is the ruffle membrane. The protein resides in the cytoplasm. The protein localises to the cell cortex. It is found in the cytoskeleton. It localises to the microvillus. A head-to-tail association, of the N-terminal and C-terminal halves results in a closed conformation (inactive form) which is incapable of actin or membrane-binding. Its function is as follows. Probably involved in connections of major cytoskeletal structures to the plasma membrane. In epithelial cells, required for the formation of microvilli and membrane ruffles on the apical pole. Along with PLEKHG6, required for normal macropinocytosis. This Bos taurus (Bovine) protein is Ezrin (EZR).